Reading from the N-terminus, the 298-residue chain is 4-hydroxy-tetrahydrodipicolinate synthase (298 aa).

Threonine 45 is a binding site for pyruvate. Residue tyrosine 133 is the Proton donor/acceptor of the active site. Lysine 161 (schiff-base intermediate with substrate) is an active-site residue. Isoleucine 203 contacts pyruvate.

This sequence belongs to the DapA family. In terms of assembly, homotetramer; dimer of dimers.

The protein localises to the cytoplasm. The enzyme catalyses L-aspartate 4-semialdehyde + pyruvate = (2S,4S)-4-hydroxy-2,3,4,5-tetrahydrodipicolinate + H2O + H(+). It functions in the pathway amino-acid biosynthesis; L-lysine biosynthesis via DAP pathway; (S)-tetrahydrodipicolinate from L-aspartate: step 3/4. In terms of biological role, catalyzes the condensation of (S)-aspartate-beta-semialdehyde [(S)-ASA] and pyruvate to 4-hydroxy-tetrahydrodipicolinate (HTPA). The sequence is that of 4-hydroxy-tetrahydrodipicolinate synthase from Wigglesworthia glossinidia brevipalpis.